We begin with the raw amino-acid sequence, 400 residues long: Inositol polyphosphate 1-phosphatase (400 aa).

Asp-54 serves as a coordination point for Li(+). Glu-79 provides a ligand contact to Mg(2+). Residue Glu-80 participates in Li(+) binding. The Mg(2+) site is built by Asp-153 and Ile-155. 3 residues coordinate 1D-myo-inositol 1,4-bisphosphate: Asp-156, Ser-157, and Thr-158. Residues 238-257 (STRSNSEAQSQGTQNPSSEG) are compositionally biased toward polar residues. A disordered region spans residues 238-258 (STRSNSEAQSQGTQNPSSEGS). The 1D-myo-inositol 1,4-bisphosphate site is built by Ser-268, Lys-270, Gly-290, Ala-291, Lys-294, and Thr-312. Asp-317 lines the Mg(2+) pocket. Residue Ser-318 is modified to Phosphoserine.

The protein belongs to the inositol monophosphatase superfamily. Monomer. The cofactor is Mg(2+).

The catalysed reaction is 1D-myo-inositol 1,4-bisphosphate + H2O = 1D-myo-inositol 4-phosphate + phosphate. It catalyses the reaction 1D-myo-inositol 1,3,4-trisphosphate + H2O = 1D-myo-inositol 3,4-bisphosphate + phosphate. Its pathway is signal transduction; phosphatidylinositol signaling pathway. Inhibited by Li(+). Functionally, mg(2+)-dependent phosphatase that catalyzes the hydrolysis of the 1-position phosphate from inositol 1,4-bisphosphate and inositol 1,3,4-trisphosphate and participates in inositol phosphate metabolism. The chain is Inositol polyphosphate 1-phosphatase from Bos taurus (Bovine).